The chain runs to 259 residues: Sugar fermentation stimulation protein homolog (259 aa).

The protein belongs to the SfsA family.

In Prochlorococcus marinus (strain MIT 9303), this protein is Sugar fermentation stimulation protein homolog.